The sequence spans 310 residues: Protein N-terminal asparagine amidohydrolase (310 aa).

As to quaternary structure, monomer.

The protein localises to the cytoplasm. The catalysed reaction is N-terminal L-asparaginyl-[protein] + H2O + H(+) = N-terminal L-aspartyl-[protein] + NH4(+). Its function is as follows. N-terminal asparagine deamidase that mediates deamidation of N-terminal asparagine residues to aspartate. Required for the ubiquitin-dependent turnover of intracellular proteins that initiate with Met-Asn. These proteins are acetylated on the retained initiator methionine and can subsequently be modified by the removal of N-acetyl methionine by acylaminoacid hydrolase (AAH). Conversion of the resulting N-terminal asparagine to aspartate by NTAN1/PNAD renders the protein susceptible to arginylation, polyubiquitination and degradation as specified by the N-end rule. This enzyme does not act on substrates with internal or C-terminal asparagines and does not act on glutamine residues in any position. In Mus musculus (Mouse), this protein is Protein N-terminal asparagine amidohydrolase.